Reading from the N-terminus, the 371-residue chain is Beta-1,3-galactosyltransferase 4 (371 aa).

At 1–4 (MPLS) the chain is on the cytoplasmic side. The helical; Signal-anchor for type II membrane protein transmembrane segment at 5 to 25 (LFRRVLLAVLLLVIIWTLFGP) threads the bilayer. The Lumenal portion of the chain corresponds to 26–371 (SGLGEELLSL…RCRFIAWFSS (346 aa)). Residue asparagine 143 is glycosylated (N-linked (GlcNAc...) asparagine).

The protein belongs to the glycosyltransferase 31 family. As to expression, expressed in heart, brain, spleen, kidney, lung and testis.

The protein localises to the golgi apparatus membrane. The catalysed reaction is a ganglioside GM2 (d18:1(4E)) + UDP-alpha-D-galactose = a ganglioside GM1 (d18:1(4E)) + UDP + H(+). It carries out the reaction a ganglioside GM2 + UDP-alpha-D-galactose = a ganglioside GM1 + UDP + H(+). The enzyme catalyses a ganglioside GD2 (d18:1(4E)) + UDP-alpha-D-galactose = a ganglioside GD1b (d18:1(4E)) + UDP + H(+). It catalyses the reaction a ganglioside GA2 (d18:1(4E)) + UDP-alpha-D-galactose = a ganglioside GA1 (d18:1(4E)) + UDP + H(+). It functions in the pathway protein modification; protein glycosylation. In terms of biological role, involved in GM1/GD1B/GA1 ganglioside biosynthesis. This is Beta-1,3-galactosyltransferase 4 from Mus musculus (Mouse).